The primary structure comprises 325 residues: Eukaryotic translation initiation factor 3 subunit I (325 aa).

WD repeat units follow at residues 8–47 (GHER…RLGT), 50–89 (GHTG…QLAL), 144–183 (CSES…IVNS), 186–225 (EHSK…HQKT), and 283–324 (GHFG…FEFE).

This sequence belongs to the eIF-3 subunit I family. Component of the eukaryotic translation initiation factor 3 (eIF-3) complex, which is composed of 13 subunits: eif3a, eif3b, eif3c, eif3d, eif3e, eif3f, eif3g, eif3h, eif3i, eif3j, eif3k, eif3l and eif3m.

The protein localises to the cytoplasm. Functionally, component of the eukaryotic translation initiation factor 3 (eIF-3) complex, which is involved in protein synthesis of a specialized repertoire of mRNAs and, together with other initiation factors, stimulates binding of mRNA and methionyl-tRNAi to the 40S ribosome. The eIF-3 complex specifically targets and initiates translation of a subset of mRNAs involved in cell proliferation. The polypeptide is Eukaryotic translation initiation factor 3 subunit I (eif3i) (Xenopus tropicalis (Western clawed frog)).